Reading from the N-terminus, the 118-residue chain is Small ribosomal subunit protein uS13 (118 aa).

Residues 92–118 (RKGLPVRGQRTKTNARTRKGPRKPIRK) form a disordered region.

The protein belongs to the universal ribosomal protein uS13 family. In terms of assembly, part of the 30S ribosomal subunit. Forms a loose heterodimer with protein S19. Forms two bridges to the 50S subunit in the 70S ribosome.

In terms of biological role, located at the top of the head of the 30S subunit, it contacts several helices of the 16S rRNA. In the 70S ribosome it contacts the 23S rRNA (bridge B1a) and protein L5 of the 50S subunit (bridge B1b), connecting the 2 subunits; these bridges are implicated in subunit movement. Contacts the tRNAs in the A and P-sites. The sequence is that of Small ribosomal subunit protein uS13 from Pseudomonas putida (strain W619).